The following is a 736-amino-acid chain: ATP-dependent zinc metalloprotease FtsH (736 aa).

2 disordered regions span residues 1-39 (MDSN…GQQR) and 57-83 (QQTQ…RKKM). The Cytoplasmic segment spans residues 1–87 (MDSNVDSQRV…ADRKKMPPGK (87 aa)). Residues 57-73 (QQTQNRTGFASADTKQG) show a composition bias toward polar residues. A helical transmembrane segment spans residues 88-108 (AWLWFVLILIVNFLMVRLLIP). Over 109–205 (DAEQPVMVPY…KPIHEERSPW (97 aa)) the chain is Periplasmic. A helical membrane pass occupies residues 206–226 (ATIVYSFGPGLLFIAFYIWLF). Over 227–736 (RRMAQQGGLG…VSLPGVAGPS (510 aa)) the chain is Cytoplasmic. 301-308 (GAPGTGKT) contributes to the ATP binding site. H522 lines the Zn(2+) pocket. The active site involves E523. Zn(2+)-binding residues include H526 and D598. Positions 706–736 (PALDAGKLPVPDGGDKNAEPSVSLPGVAGPS) are disordered.

It in the central section; belongs to the AAA ATPase family. The protein in the C-terminal section; belongs to the peptidase M41 family. Homohexamer. Zn(2+) serves as cofactor.

It is found in the cell inner membrane. Functionally, acts as a processive, ATP-dependent zinc metallopeptidase for both cytoplasmic and membrane proteins. Plays a role in the quality control of integral membrane proteins. The polypeptide is ATP-dependent zinc metalloprotease FtsH (Syntrophus aciditrophicus (strain SB)).